A 111-amino-acid chain; its full sequence is Ig kappa chain V-III region PC 7175 (111 aa).

A framework-1 region spans residues 1-23 (DIVLTQSPASLAVSLGQRATISC). Cys23 and Cys92 are joined by a disulfide. The segment at 24 to 38 (RASKSVSTSGYSYMH) is complementarity-determining-1. Positions 39–53 (WYQQKPGQPPKLLIY) are framework-2. Positions 54–60 (LASNLES) are complementarity-determining-2. The interval 61–92 (GVPARFSGSGSGTDFTLNIHPVEEEDAATYYC) is framework-3. Positions 93–101 (QHSRELPLT) are complementarity-determining-3. The interval 102–111 (FGAGTKLELK) is framework-4.

The chain is Ig kappa chain V-III region PC 7175 from Mus musculus (Mouse).